We begin with the raw amino-acid sequence, 379 residues long: Pectin lyase A (379 aa).

Residues 1–20 form the signal peptide; it reads MKTTFLVSLATAALSSTAAA. 2 disulfides stabilise this stretch: C83–C102 and C92–C226. Residue R256 is part of the active site. A disulfide bridge connects residues C323 and C331.

The protein belongs to the polysaccharide lyase 1 family.

It is found in the secreted. The enzyme catalyses Eliminative cleavage of (1-&gt;4)-alpha-D-galacturonan methyl ester to give oligosaccharides with 4-deoxy-6-O-methyl-alpha-D-galact-4-enuronosyl groups at their non-reducing ends.. Its function is as follows. Pectinolytic enzymes consist of four classes of enzymes: pectin lyase, polygalacturonase, pectin methylesterase and rhamnogalacturonase. Among pectinolytic enzymes, pectin lyase is the most important in depolymerization of pectin, since it cleaves internal glycosidic bonds of highly methylated pectins. This is Pectin lyase A (pelA) from Emericella nidulans (strain FGSC A4 / ATCC 38163 / CBS 112.46 / NRRL 194 / M139) (Aspergillus nidulans).